Consider the following 572-residue polypeptide: Sulfate adenylyltransferase (572 aa).

The N-terminal stretch occupies residues 1–169; it reads MANTPHGGVL…IQAINKLNHY (169 aa). The catalytic stretch occupies residues 170 to 394; it reads DYVGLRYTPA…LRESHPPRAK (225 aa). Glutamine 197 lines the sulfate pocket. Residues 197-200 and 291-294 contribute to the ATP site; these read QTRN and GRDH. Active-site residues include threonine 198, arginine 199, and asparagine 200. Position 199 (arginine 199) interacts with sulfate. Position 295 (alanine 295) interacts with sulfate. Residue methionine 333 coordinates ATP. An allosteric regulation domain; adenylyl-sulfate kinase-like region spans residues 395 to 572; that stretch reads QGFTIFLTGH…LLESQGFFGN (178 aa). Residues 434-437, arginine 451, 477-478, and lysine 515 contribute to the 3'-phosphoadenylyl sulfate site; these read ETVR and IA.

In the N-terminal section; belongs to the sulfate adenylyltransferase family. This sequence in the C-terminal section; belongs to the APS kinase family. In terms of assembly, homohexamer. Dimer of trimers.

It localises to the cytoplasm. The enzyme catalyses sulfate + ATP + H(+) = adenosine 5'-phosphosulfate + diphosphate. The protein operates within sulfur metabolism; hydrogen sulfide biosynthesis; sulfite from sulfate: step 1/3. With respect to regulation, allosterically inhibited by 3'-phosphoadenosine 5'-phosphosulfate (PAPS). Its function is as follows. Catalyzes the first intracellular reaction of sulfate assimilation, forming adenosine-5'-phosphosulfate (APS) from inorganic sulfate and ATP. Plays an important role in sulfate activation as a component of the biosynthesis pathway of sulfur-containing amino acids. This Yarrowia lipolytica (strain CLIB 122 / E 150) (Yeast) protein is Sulfate adenylyltransferase.